The following is a 314-amino-acid chain: Putative lipoprotein LppW (314 aa).

An N-terminal signal peptide occupies residues 1 to 22 (MRARPLTLLTALAAVTLVVVAG). Residue Cys-23 is the site of N-palmitoyl cysteine attachment. Residue Cys-23 is the site of S-diacylglycerol cysteine attachment.

The protein resides in the cell membrane. The polypeptide is Putative lipoprotein LppW (lppW) (Mycobacterium bovis (strain ATCC BAA-935 / AF2122/97)).